The chain runs to 192 residues: Fe/S biogenesis protein NfuA (192 aa).

2 residues coordinate [4Fe-4S] cluster: Cys149 and Cys152.

The protein belongs to the NfuA family. In terms of assembly, homodimer. The cofactor is [4Fe-4S] cluster.

Functionally, involved in iron-sulfur cluster biogenesis. Binds a 4Fe-4S cluster, can transfer this cluster to apoproteins, and thereby intervenes in the maturation of Fe/S proteins. Could also act as a scaffold/chaperone for damaged Fe/S proteins. This Alteromonas mediterranea (strain DSM 17117 / CIP 110805 / LMG 28347 / Deep ecotype) protein is Fe/S biogenesis protein NfuA.